The sequence spans 507 residues: ATP synthase subunit alpha, chloroplastic (507 aa).

170–177 (GDRQTGKT) is a binding site for ATP. Thr257 bears the Phosphothreonine mark.

It belongs to the ATPase alpha/beta chains family. F-type ATPases have 2 components, CF(1) - the catalytic core - and CF(0) - the membrane proton channel. CF(1) has five subunits: alpha(3), beta(3), gamma(1), delta(1), epsilon(1). CF(0) has four main subunits: a, b, b' and c.

It localises to the plastid. It is found in the chloroplast thylakoid membrane. It carries out the reaction ATP + H2O + 4 H(+)(in) = ADP + phosphate + 5 H(+)(out). Its function is as follows. Produces ATP from ADP in the presence of a proton gradient across the membrane. The alpha chain is a regulatory subunit. This is ATP synthase subunit alpha, chloroplastic from Aethionema cordifolium (Lebanon stonecress).